A 104-amino-acid polypeptide reads, in one-letter code: NLSSLLKSPMPIPRRARRAFLSSLRFLCWAKVRRAGFSGKFNPTPVPVLFSNKLVRQGLETLYCSKRINIVKIQSDLKSGNLVLSKELLIVQQKLVSKQNQVNN.

Its subcellular location is the mitochondrion. This is an uncharacterized protein from Claviceps purpurea (Ergot fungus).